A 243-amino-acid polypeptide reads, in one-letter code: Myelin protein P0 (243 aa).

The signal sequence occupies residues 1–26 (MESSGLRAPCSLLVLLSALVLPPTLA). Residues 27–141 (IEVYTDREVY…VGKSSYVHLQ (115 aa)) enclose the Ig-like V-type domain. The Extracellular portion of the chain corresponds to 27–154 (IEVYTDREVY…KGAARAGLVL (128 aa)). Cys47 and Cys123 form a disulfide bridge. Residue Asn118 is glycosylated (N-linked (GlcNAc...) asparagine). The chain crosses the membrane as a helical span at residues 155–175 (GIIIAVALALVIVVTILILLI). The Cytoplasmic portion of the chain corresponds to 176-243 (RYCWLRRQVR…GIGDSRKDRK (68 aa)). The interval 201–243 (AKDSSKRSSRQTPILYAMLDQTRGKASEKKGKGGIGDSRKDRK) is disordered. Positions 222 to 243 (TRGKASEKKGKGGIGDSRKDRK) are enriched in basic and acidic residues.

This sequence belongs to the myelin P0 protein family.

Its subcellular location is the cell membrane. Functionally, creation of an extracellular membrane face which guides the wrapping process and ultimately compacts adjacent lamellae. The protein is Myelin protein P0 (mpz) of Xenopus tropicalis (Western clawed frog).